The primary structure comprises 251 residues: Leucine-rich repeat and calponin homology domain-containing protein 1 (251 aa).

The tract at residues 73-97 is disordered; it reads SNGSEYSPNEIRANSPAISPTANST. S87 and S91 each carry phosphoserine. Residues 88–97 show a composition bias toward polar residues; it reads PAISPTANST. A Phosphothreonine modification is found at T123. In terms of domain architecture, Calponin-homology (CH) spans 131 to 244; the sequence is MREEKELVEH…ITVQALLDVT (114 aa).

In terms of assembly, interacts (via LRR repeats) with unphosphorylated DOCK8 (via DHR-2 domain); the interaction prevents the interaction between DOCK8 and CDC42.

Its subcellular location is the cytoplasm. Functionally, acts as a negative regulator of GTPase CDC42 by sequestering CDC42-guanine exchange factor DOCK8. Probably by preventing CDC42 activation, negatively regulates CD4(+) T-cell migration. In Felis catus (Cat), this protein is Leucine-rich repeat and calponin homology domain-containing protein 1.